Consider the following 119-residue polypeptide: MTLDDIENNNNDHGQFMPMYDEGVNFPSYSNNFQPLKIEKNDKEDRQVTCSIVLFVLGFLLLIPWIINVINIKSKNKMARGFSIASVVLFSLSIAIIVIFVIFFIFLITSLHNSHREDR.

Helical transmembrane passes span 52–72 and 88–108; these read IVLF…VINI and VLFS…IFLI.

It is found in the membrane. This is an uncharacterized protein from Dictyostelium discoideum (Social amoeba).